Here is a 198-residue protein sequence, read N- to C-terminus: Protein-L-isoaspartate O-methyltransferase (198 aa).

Serine 50 is a catalytic residue.

The protein belongs to the methyltransferase superfamily. L-isoaspartyl/D-aspartyl protein methyltransferase family.

The protein resides in the cytoplasm. The enzyme catalyses [protein]-L-isoaspartate + S-adenosyl-L-methionine = [protein]-L-isoaspartate alpha-methyl ester + S-adenosyl-L-homocysteine. Functionally, catalyzes the methyl esterification of L-isoaspartyl residues in peptides and proteins that result from spontaneous decomposition of normal L-aspartyl and L-asparaginyl residues. It plays a role in the repair and/or degradation of damaged proteins. The sequence is that of Protein-L-isoaspartate O-methyltransferase from Thermosipho melanesiensis (strain DSM 12029 / CIP 104789 / BI429).